A 248-amino-acid polypeptide reads, in one-letter code: Inhibitor of growth protein 4 (248 aa).

Residues 25–118 (FQLMRDLDQR…ADLKEKQIES (94 aa)) are a coiled coil. N6-acetyllysine is present on residues lysine 112, lysine 127, and lysine 129. The tract at residues 115 to 160 (QIESSDYDSSSSKGKKSRTQKEKKAARARSKGKNSDEEAPKAAQKK) is disordered. A Bipartite nuclear localization signal motif is present at residues 127–147 (KGKKSRTQKEKKAARARSKGK). Arginine 132 carries the post-translational modification Citrulline. N6-acetyllysine occurs at positions 145, 147, and 155. Residue arginine 165 is modified to Citrulline. The PHD-type zinc-finger motif lies at 195–244 (PTYCLCHQVSYGEMIGCDNPDCSIERFHFACVGLTTKPRGKWFCPRCSQE). The Zn(2+) site is built by cysteine 198, cysteine 200, cysteine 211, cysteine 216, histidine 222, cysteine 225, cysteine 238, and cysteine 241.

It belongs to the ING family. As to quaternary structure, homodimer. Component of the HBO1 complex composed of KAT7/HBO1, MEAF6, ING4 or ING5, and one scaffold subunit: complexes containing BRPF scaffold (BRPF1, BRD1/BRPF2 or BRPF3) direct KAT7/HBO1 specificity towards H3K14ac, while complexes containing JADE scaffold (JADE1, JADE2 and JADE3) mediate acetylation of histone H4. Interacts with H3K4me3 and to a lesser extent with H3K4me2, the interaction augments KAT7/HBO1 acetylation activity on H3 tails. Interacts with EP300, RELA and TP53; these interactions may be indirect. Interacts with EGLN1. Interacts with BCL2A1. Citrullination by PADI4 within the nuclear localization signal disrupts the interaction with p53 and increases susceptibility to degradation.

It localises to the nucleus. Component of HBO1 complexes, which specifically mediate acetylation of histone H3 at 'Lys-14' (H3K14ac), and have reduced activity toward histone H4. Through chromatin acetylation it may function in DNA replication. May inhibit tumor progression by modulating the transcriptional output of signaling pathways which regulate cell proliferation. Can suppress brain tumor angiogenesis through transcriptional repression of RELA/NFKB3 target genes when complexed with RELA. May also specifically suppress loss of contact inhibition elicited by activated oncogenes such as MYC. Represses hypoxia inducible factor's (HIF) activity by interacting with HIF prolyl hydroxylase 2 (EGLN1). Can enhance apoptosis induced by serum starvation in mammary epithelial cell line HC11. This Bos taurus (Bovine) protein is Inhibitor of growth protein 4 (ING4).